Reading from the N-terminus, the 20-residue chain is Pregnancy-associated glycoprotein 55h (20 aa).

The N-linked (GlcNAc...) asparagine glycan is linked to N4.

Belongs to the peptidase A1 family. In terms of tissue distribution, highly expressed in the placenta between day 60 and day 100 of gestation.

The protein resides in the secreted. It is found in the extracellular space. This chain is Pregnancy-associated glycoprotein 55h, found in Ovis aries (Sheep).